The sequence spans 289 residues: HTH-type transcriptional activator AmpR (289 aa).

The region spanning 6–63 (LPLNALRVFEVAMRQGSFTKAAIELRVTQAAVSHQVARLEDLLGTALFLRTSQGLIPT) is the HTH lysR-type domain. Residues 23–42 (FTKAAIELRVTQAAVSHQVA) constitute a DNA-binding region (H-T-H motif).

This sequence belongs to the LysR transcriptional regulatory family.

Its subcellular location is the cytoplasm. This protein is a positive regulator of gene expression of cephalosporinase (AmpC). This is HTH-type transcriptional activator AmpR (ampR) from Rhodobacter capsulatus (Rhodopseudomonas capsulata).